The primary structure comprises 88 residues: Pigment dispersing factor homolog pdf-1 (88 aa).

An N-terminal signal peptide occupies residues 1–21 (MNRFIISMIALLAVFCAVSTA).

The protein resides in the secreted. Probable ligand of isoforms a and b of the calcitonin receptor-like protein, pdfr-1, a G-protein coupled receptor. May not signal through isoform c of pdfr-1. Involved in locomotion; more specifically mate searching behavior of males, independent of nutritional status. Involved in regulating the male-specific expression of TGFbeta-like daf-7 in the ASJ chemosensory neurons. Plays a role in circadian rhythms of locomotor activity. Involved in mediating arousal from the sleep-like state called lethargus, which occurs during molting between larval and adult stages, in part by regulating touch sensitivity, and working in concert with neuropeptide flp-2. In the presence of food, plays a role in initiating and extending exploratory roaming behavior, in opposition to 5-hydroxytryptamine (serotonin) signaling. The sequence is that of Pigment dispersing factor homolog pdf-1 from Caenorhabditis elegans.